Consider the following 280-residue polypeptide: MALKSYKPTTPGQRGLVLIDRSELWKGRPVKSLTEGLTKSGGRNNTGRITSRRRGGGAKRLYRIVDFKRNKFDVAATVERIEYDPNRTAFIALVKYEDGEQAYILAPQRLAVGDKVIASAKADIKPGNAMPFSGMPIGTIVHNIEMKPGKGGQIARAAGTYAQFVGRDGGYAQIRLSSGELRLVRQECMATVGAVSNPDNSNQNYGKAGRMRHKGKRPSVRGVVMNPIDHPHGGGEGRTSGGRHPVTPWGKPTKGKRTRNTNKASQKLIIRSRHAKKKGR.

Disordered stretches follow at residues 33 to 55 (LTEG…RRRG) and 199 to 266 (DNSN…KASQ). Positions 209–219 (GRMRHKGKRPS) are enriched in basic residues.

This sequence belongs to the universal ribosomal protein uL2 family. Part of the 50S ribosomal subunit. Forms a bridge to the 30S subunit in the 70S ribosome.

Functionally, one of the primary rRNA binding proteins. Required for association of the 30S and 50S subunits to form the 70S ribosome, for tRNA binding and peptide bond formation. It has been suggested to have peptidyltransferase activity; this is somewhat controversial. Makes several contacts with the 16S rRNA in the 70S ribosome. This chain is Large ribosomal subunit protein uL2, found in Ruegeria sp. (strain TM1040) (Silicibacter sp.).